We begin with the raw amino-acid sequence, 510 residues long: Maturase K (510 aa).

Belongs to the intron maturase 2 family. MatK subfamily.

Its subcellular location is the plastid. It localises to the chloroplast. Usually encoded in the trnK tRNA gene intron. Probably assists in splicing its own and other chloroplast group II introns. The protein is Maturase K of Populus trichocarpa (Western balsam poplar).